Reading from the N-terminus, the 351-residue chain is Heat shock factor protein HSF30 (351 aa).

Residues 29 to 123 mediate DNA binding; the sequence is PPPFLSKTYE…LLKTIKRRRN (95 aa).

Belongs to the HSF family. As to quaternary structure, homotrimer. In terms of processing, exhibits temperature-dependent phosphorylation.

It localises to the nucleus. Functionally, DNA-binding protein that specifically binds heat shock promoter elements (HSE) and activates transcription. The sequence is that of Heat shock factor protein HSF30 (HSF30) from Solanum peruvianum (Peruvian tomato).